A 401-amino-acid polypeptide reads, in one-letter code: Coenzyme A biosynthesis bifunctional protein CoaBC (401 aa).

The phosphopantothenoylcysteine decarboxylase stretch occupies residues 1–190 (MQTLAGKKIL…FQPKPLQDKS (190 aa)). The active-site Proton donor is the Cys-159. The phosphopantothenate--cysteine ligase stretch occupies residues 191–401 (ILITAGPTRE…LKQIQTLMGH (211 aa)). Residues Asp-279, Lys-289, 307-310 (PDIV), Phe-326, Lys-340, and Lys-344 contribute to the CTP site.

In the N-terminal section; belongs to the HFCD (homo-oligomeric flavin containing Cys decarboxylase) superfamily. This sequence in the C-terminal section; belongs to the PPC synthetase family. It depends on Mg(2+) as a cofactor. Requires FMN as cofactor.

The enzyme catalyses N-[(R)-4-phosphopantothenoyl]-L-cysteine + H(+) = (R)-4'-phosphopantetheine + CO2. It catalyses the reaction (R)-4'-phosphopantothenate + L-cysteine + CTP = N-[(R)-4-phosphopantothenoyl]-L-cysteine + CMP + diphosphate + H(+). Its pathway is cofactor biosynthesis; coenzyme A biosynthesis; CoA from (R)-pantothenate: step 2/5. It functions in the pathway cofactor biosynthesis; coenzyme A biosynthesis; CoA from (R)-pantothenate: step 3/5. In terms of biological role, catalyzes two sequential steps in the biosynthesis of coenzyme A. In the first step cysteine is conjugated to 4'-phosphopantothenate to form 4-phosphopantothenoylcysteine. In the second step the latter compound is decarboxylated to form 4'-phosphopantotheine. This chain is Coenzyme A biosynthesis bifunctional protein CoaBC, found in Vibrio vulnificus (strain YJ016).